The primary structure comprises 257 residues: Ribosome-recycling factor, mitochondrial (257 aa).

It belongs to the RRF family.

The protein resides in the mitochondrion. Necessary for protein synthesis in mitochondria. Functions as a ribosome recycling factor in mitochondria. In Debaryomyces hansenii (strain ATCC 36239 / CBS 767 / BCRC 21394 / JCM 1990 / NBRC 0083 / IGC 2968) (Yeast), this protein is Ribosome-recycling factor, mitochondrial (RRF1).